We begin with the raw amino-acid sequence, 901 residues long: Protein translocase subunit SecA (901 aa).

ATP contacts are provided by residues Gln87, 105–109, and Asp512; that span reads GEGKT. A disordered region spans residues 859-901; the sequence is HQDDDSAAAAALAAQTGERKVGRNDPCPCGSGKKYKQCHGRLQ. Residues Cys885, Cys887, Cys896, and His897 each coordinate Zn(2+). The segment covering 891–901 has biased composition (basic residues); the sequence is KKYKQCHGRLQ.

Belongs to the SecA family. In terms of assembly, monomer and homodimer. Part of the essential Sec protein translocation apparatus which comprises SecA, SecYEG and auxiliary proteins SecDF-YajC and YidC. It depends on Zn(2+) as a cofactor.

It is found in the cell inner membrane. It localises to the cytoplasm. It carries out the reaction ATP + H2O + cellular proteinSide 1 = ADP + phosphate + cellular proteinSide 2.. In terms of biological role, part of the Sec protein translocase complex. Interacts with the SecYEG preprotein conducting channel. Has a central role in coupling the hydrolysis of ATP to the transfer of proteins into and across the cell membrane, serving both as a receptor for the preprotein-SecB complex and as an ATP-driven molecular motor driving the stepwise translocation of polypeptide chains across the membrane. This is Protein translocase subunit SecA from Escherichia coli O139:H28 (strain E24377A / ETEC).